Consider the following 187-residue polypeptide: UPF0301 protein Spro_4027 (187 aa).

The protein belongs to the UPF0301 (AlgH) family.

In Serratia proteamaculans (strain 568), this protein is UPF0301 protein Spro_4027.